The following is a 144-amino-acid chain: Mannitol-specific phosphotransferase enzyme IIA component (144 aa).

The 140-residue stretch at 3-142 (ELFSNDNIFL…EEIKQVFEEA (140 aa)) folds into the PTS EIIA type-2 domain. Histidine 63 (tele-phosphohistidine intermediate) is an active-site residue. Histidine 63 is subject to Phosphohistidine; by HPr.

Homodimer or homotrimer. Seems to be a monomer when not phosphorylated.

The protein resides in the cytoplasm. Its function is as follows. The phosphoenolpyruvate-dependent sugar phosphotransferase system (sugar PTS), a major carbohydrate active transport system, catalyzes the phosphorylation of incoming sugar substrates concomitantly with their translocation across the cell membrane. The enzyme II CmtAB PTS system is involved in D-mannitol transport. The polypeptide is Mannitol-specific phosphotransferase enzyme IIA component (mtlF) (Staphylococcus aureus (strain MRSA252)).